The primary structure comprises 140 residues: MEQELMRIGVSLPEKLLSRFDEIISQRGYSSRSEGIRDAIRNYIIHYEWMSDVEGERVGVITIVYSHHQRGLVDSLTDIQHEFGSIINSSLHVHLDKDNCLEVVILRGEGKDVRRAAERMMALKGVKHVKLTTTSVGAEL.

Positions 81, 92, 94, and 100 each coordinate Ni(2+).

This sequence belongs to the transcriptional regulatory CopG/NikR family. Requires Ni(2+) as cofactor.

Its function is as follows. Transcriptional regulator. The polypeptide is Putative nickel-responsive regulator (Methanothrix thermoacetophila (strain DSM 6194 / JCM 14653 / NBRC 101360 / PT) (Methanosaeta thermophila)).